An 80-amino-acid polypeptide reads, in one-letter code: MIIPWQDLDSDTLNNLLEHFVLREGTEYGEHDVSLADKVDEVRQQLKQGLAVIVYSELHESINIVSKATFSSAPVDDIPE.

This sequence belongs to the UPF0270 family.

This Aeromonas salmonicida (strain A449) protein is UPF0270 protein ASA_3305.